Reading from the N-terminus, the 932-residue chain is Protocadherin gamma-A8 (932 aa).

The first 29 residues, 1-29 (MAAPQSRPRRGELILLCALLGTLWEIGRG), serve as a signal peptide directing secretion. Cadherin domains follow at residues 30–133 (QIRY…NPKF), 134–242 (QVED…APVF), 243–347 (PHPI…RPEV), 348–452 (IITS…PPTF), 453–562 (PHAS…APEI), and 570–682 (DGST…KPSV). The Extracellular segment spans residues 30 to 692 (QIRYSVPEET…DPNDSSLTLY (663 aa)). N47 is a glycosylation site (N-linked (GlcNAc...) asparagine). 3 N-linked (GlcNAc...) asparagine glycosylation sites follow: N414, N419, and N545. A glycan (N-linked (GlcNAc...) asparagine) is linked at N685. Residues 693 to 713 (LVVAVAAISCVFLAFVAVLLG) form a helical membrane-spanning segment. The Cytoplasmic segment spans residues 714-932 (LRLRRWHKSR…KKKSGKKEKK (219 aa)). 2 disordered regions span residues 804–841 (ADHG…WPNN) and 902–932 (ATLT…KEKK). A compositionally biased stretch (polar residues) spans 810-841 (APPNTDWRFSQAQRPGTSGSQNGDDTGTWPNN). A compositionally biased stretch (basic residues) spans 922 to 932 (NKKKSGKKEKK).

The protein localises to the cell membrane. Its function is as follows. Potential calcium-dependent cell-adhesion protein. May be involved in the establishment and maintenance of specific neuronal connections in the brain. This is Protocadherin gamma-A8 (PCDHGA8) from Homo sapiens (Human).